The sequence spans 423 residues: uncharacterized protein (423 aa).

Belongs to the asfivirus E423R family.

The protein localises to the virion. This is an uncharacterized protein from African swine fever virus (isolate Pig/Kenya/KEN-50/1950) (ASFV).